We begin with the raw amino-acid sequence, 89 residues long: Small ribosomal subunit protein uS15 (89 aa).

Belongs to the universal ribosomal protein uS15 family. Part of the 30S ribosomal subunit. Forms a bridge to the 50S subunit in the 70S ribosome, contacting the 23S rRNA.

One of the primary rRNA binding proteins, it binds directly to 16S rRNA where it helps nucleate assembly of the platform of the 30S subunit by binding and bridging several RNA helices of the 16S rRNA. Its function is as follows. Forms an intersubunit bridge (bridge B4) with the 23S rRNA of the 50S subunit in the ribosome. The polypeptide is Small ribosomal subunit protein uS15 (Bdellovibrio bacteriovorus (strain ATCC 15356 / DSM 50701 / NCIMB 9529 / HD100)).